The following is a 409-amino-acid chain: Histidine--tRNA ligase (409 aa).

It belongs to the class-II aminoacyl-tRNA synthetase family.

The protein resides in the cytoplasm. It catalyses the reaction tRNA(His) + L-histidine + ATP = L-histidyl-tRNA(His) + AMP + diphosphate + H(+). In Methanosphaerula palustris (strain ATCC BAA-1556 / DSM 19958 / E1-9c), this protein is Histidine--tRNA ligase.